We begin with the raw amino-acid sequence, 294 residues long: Elongation factor Ts (294 aa).

Residues 80–83 are involved in Mg(2+) ion dislocation from EF-Tu; it reads TDFV.

This sequence belongs to the EF-Ts family.

Its subcellular location is the cytoplasm. Its function is as follows. Associates with the EF-Tu.GDP complex and induces the exchange of GDP to GTP. It remains bound to the aminoacyl-tRNA.EF-Tu.GTP complex up to the GTP hydrolysis stage on the ribosome. The polypeptide is Elongation factor Ts (Listeria monocytogenes serotype 4b (strain CLIP80459)).